The following is a 294-amino-acid chain: Putative pyruvate, phosphate dikinase regulatory protein (294 aa).

156–163 (GVSRSGKT) contacts ADP.

It belongs to the pyruvate, phosphate/water dikinase regulatory protein family. PDRP subfamily.

The enzyme catalyses N(tele)-phospho-L-histidyl/L-threonyl-[pyruvate, phosphate dikinase] + ADP = N(tele)-phospho-L-histidyl/O-phospho-L-threonyl-[pyruvate, phosphate dikinase] + AMP + H(+). The catalysed reaction is N(tele)-phospho-L-histidyl/O-phospho-L-threonyl-[pyruvate, phosphate dikinase] + phosphate + H(+) = N(tele)-phospho-L-histidyl/L-threonyl-[pyruvate, phosphate dikinase] + diphosphate. Functionally, bifunctional serine/threonine kinase and phosphorylase involved in the regulation of the pyruvate, phosphate dikinase (PPDK) by catalyzing its phosphorylation/dephosphorylation. The chain is Putative pyruvate, phosphate dikinase regulatory protein from Cutibacterium acnes (strain DSM 16379 / KPA171202) (Propionibacterium acnes).